An 802-amino-acid chain; its full sequence is MKKKNIKNSMNNHTPMIKQYLSLKSQYPDMLLFYQMGDFYELFYEDAERISELLKITLTKKGYSNHKIIPMAGVPCHKSEYYLSKLVKLGESIAICDQQKETDCKKKLISRKVVRIITPGTVTDEVLLEENEDNFIAAIWKENNQFGYSVLDLSLGFFGVSKIFSSCDLLSEIERTNPKEILYPENFSDVFLIESRKCIRKRSLLEFDLETSYKLLNLQFNTCSLDGFGIEKNNFVIRAAGCLLQYVKSMNMTVLPNIRQLKYNYMEDSIFMNFSTRKSLEITQNISGEKKNTLSAILNKTVTSMGSRMLNRWLNSPLKNFKIVRNRHESVEALKFFYKELQFILRQVNDLERIYSRLALRTASPHDFVRMRSTLEILPNLHLILKKIKSKHIKKIRLSIGYFEEVLCLLKKAISLKPSKCIRDGGVIAELYNIELDELRSIKINSKEYIKNFEQKEKKKLMIESFKIKFNKIIGYYIQISKRHTHLIPKYYVIIQTLKNTERYSVPLLKEYEEKVLNSEMRSLLLEKKLYAEIFNIIEPFLEKLQNSALALSELDVLVNLSERAISLNYTRPIMSEKYGISLLESRHPVVECFLKTPFIKNSVFLSRTQRMIIITGPNMGGKSTYMRQIALIVIMAGIGSFVPARYALIGSIDKIFTRIGSADDLSNGYSTFMMEMMEISNILHNATSNSLVLIDELGRGTSTNEGLSLAWSCSRYLININKSMTLLSTHFVELTKLEEKEKFVKNFHFSAIKSDLHIAFLYKIKNGISKKSYGISVASLSGLPDSVLEDAEKKLIEIENT.

ATP is bound at residue Gly617–Ser624.

This sequence belongs to the DNA mismatch repair MutS family.

In terms of biological role, this protein is involved in the repair of mismatches in DNA. It is possible that it carries out the mismatch recognition step. This protein has a weak ATPase activity. The polypeptide is DNA mismatch repair protein MutS (Buchnera aphidicola subsp. Acyrthosiphon pisum (strain 5A)).